The sequence spans 347 residues: Protein RecA (347 aa).

68-75 (GPESSGKT) lines the ATP pocket.

The protein belongs to the RecA family.

It localises to the cytoplasm. In terms of biological role, can catalyze the hydrolysis of ATP in the presence of single-stranded DNA, the ATP-dependent uptake of single-stranded DNA by duplex DNA, and the ATP-dependent hybridization of homologous single-stranded DNAs. It interacts with LexA causing its activation and leading to its autocatalytic cleavage. The sequence is that of Protein RecA from Nocardia farcinica (strain IFM 10152).